We begin with the raw amino-acid sequence, 235 residues long: MTDLTEKNTALEEEKIESAVENQQKSIWKEIFAQGIWKNNPAVVQLLGLCPLLAVSSTATNALGLGLATMLVLTCTNTVISLFRQYIPKEIRIPIYVMIIATTVTAVQLLMNAYTYTLYQSLGIFIPLIVTNCIIIGRAEAFASKNSLLHSIWDGFSMGLGMALSLTILGALREIIGQGTIFEGIENLFGEQAKFLTHHIYHTDSSFLLFILPPGAFIGLGLLLAIKNRIDNVKK.

Helical transmembrane passes span 63–83, 93–113, 117–137, 152–172, and 206–226; these read LGLG…ISLF, IPIY…LMNA, TLYQ…IIIG, IWDG…LGAL, and SFLL…LLAI.

This sequence belongs to the NqrDE/RnfAE family. As to quaternary structure, the complex is composed of six subunits: RnfA, RnfB, RnfC, RnfD, RnfE and RnfG.

The protein resides in the cell inner membrane. In terms of biological role, part of a membrane-bound complex that couples electron transfer with translocation of ions across the membrane. In Haemophilus influenzae (strain 86-028NP), this protein is Ion-translocating oxidoreductase complex subunit E.